A 1080-amino-acid chain; its full sequence is MGAGEMAEALGEELEREIQRRWEEMDLLSKVLEKNRDGPLFYFLDGPPYASGSIHLGTAWNKIIKDAVNRYKLMRGYRVRLQPGWDCHGLPIEVKVEQEVLSDEIECKKDIEEKVGVDKFVEKCKEFALKHVEIMTEQFKRLGVLMDWDNPYMTLDNEYIEGAWYTLKRAHERGLLDRDVRIVNWCPRCETALADHEVEYKEVEDPSIFVIFPIEDDSDAEVDLPENSALLIWTTTPWTLPANLAVAVHPEEEYVLARAEVDGEEWHLIVADKLKVVLSVVTDSYEIVDSFPGEALEGLRYRPPLWEEVPKLRELHEEDDRVHRVYTAEWVTMEEGTGCVHSAPGHGEEDFELGREVGLPPHCPVAEDGTFTEDGGKYEGLYVRDANEKIVEDLREKGLLAHEDTVEHRYGHCWRCKTPIIYRATEQWFLKVTEVKDEMLEWIERVEWIPEWAGHSRFKSWVENARDWCISRQRYWGIPLPVWECEECGHLEVIGSLSELEAKAVSLPPGEPDLHRPWVDEVVLKCPECGSYMRRVPDVLDVWVDSGVAAWASLGYPRREDEFERWFLKEGRCDPDDPEAGADFITEGHDQTRGWFYSQLGCGVVTFDTCPYRTVLMHGFTLDEEGRKMSKSLGNVVDPMDVVEKYGADTLRWYVLRSNAPWRDMHFSWQDVRDTHRALNVLWNAYRFTKMYSELDEFDPEEHPLEDLEEHLKPEDRWLLSRINSLVEEVTDAFERYHVHEAARALYRFVTEDLSRWYIRLVRERVWLEGDDPEKLAVYAVLHYTFDRLVRLLAPIVPHVAERIYLDYVRAGDDPESVHLTDWPEVDDRWVDEGLEKAMELVRKAAEAALSVRQRAGVKTRWPLRRLFVEVEDPKRLEDLKDVLARVANVKEVELGEEFPEKVPVAEPRPDKIGPEFRSLAGRVIEHVKDRAEEVARSILKDGEYRTELDGEDVVLTEEHVKVTEDLPEGWEAEEFEGGRVYVFVELDEELKSEAWAREVVRRVQEMRKELDLNLEERIRVWIETDEEIAEAVEEHSEYVRGETRADELHVNEGWPEEVDLEREWEVEDRTIRIAVVVSG.

A 'HIGH' region motif is present at residues 48 to 58 (PYASGSIHLGT). The 'KMSKS' region signature appears at 628-632 (KMSKS). Lys-631 contacts ATP.

The protein belongs to the class-I aminoacyl-tRNA synthetase family. IleS type 2 subfamily. As to quaternary structure, monomer. Zn(2+) is required as a cofactor.

It localises to the cytoplasm. The enzyme catalyses tRNA(Ile) + L-isoleucine + ATP = L-isoleucyl-tRNA(Ile) + AMP + diphosphate. Catalyzes the attachment of isoleucine to tRNA(Ile). As IleRS can inadvertently accommodate and process structurally similar amino acids such as valine, to avoid such errors it has two additional distinct tRNA(Ile)-dependent editing activities. One activity is designated as 'pretransfer' editing and involves the hydrolysis of activated Val-AMP. The other activity is designated 'posttransfer' editing and involves deacylation of mischarged Val-tRNA(Ile). The sequence is that of Isoleucine--tRNA ligase from Methanopyrus kandleri (strain AV19 / DSM 6324 / JCM 9639 / NBRC 100938).